The chain runs to 318 residues: Probable carboxylesterase 1 (318 aa).

An N-acetylmethionine modification is found at M1. The short motif at 79 to 81 (HGG) is the Involved in the stabilization of the negatively charged intermediate by the formation of the oxyanion hole element. Active-site residues include S163, D258, and H290.

It belongs to the 'GDXG' lipolytic enzyme family. In terms of tissue distribution, expressed in roots, stems, flowers and siliques.

It catalyses the reaction a carboxylic ester + H2O = an alcohol + a carboxylate + H(+). Carboxylesterase acting on esters with varying acyl chain length. In Arabidopsis thaliana (Mouse-ear cress), this protein is Probable carboxylesterase 1 (CXE1).